The following is a 152-amino-acid chain: Small ribosomal subunit protein uS8m (152 aa).

The protein belongs to the universal ribosomal protein uS8 family. As to quaternary structure, component of the mitochondrial small ribosomal subunit (mt-SSU). Mature yeast 74S mitochondrial ribosomes consist of a small (37S) and a large (54S) subunit. The 37S small subunit contains a 15S ribosomal RNA (15S mt-rRNA) and at least 32 different proteins. The 54S large subunit contains a 21S rRNA (21S mt-rRNA) and at least 45 different proteins.

The protein resides in the mitochondrion. Functionally, component of the mitochondrial ribosome (mitoribosome), a dedicated translation machinery responsible for the synthesis of mitochondrial genome-encoded proteins, including at least some of the essential transmembrane subunits of the mitochondrial respiratory chain. The mitoribosomes are attached to the mitochondrial inner membrane and translation products are cotranslationally integrated into the membrane. The polypeptide is Small ribosomal subunit protein uS8m (mrps8) (Schizosaccharomyces pombe (strain 972 / ATCC 24843) (Fission yeast)).